A 249-amino-acid polypeptide reads, in one-letter code: MARYDRAITVFSPDGHLFQVEYALEAVRKGNAAVGVRGTDNVVLGVEKKSTAKLQDTRSVRKIVNLDDHIALACAGLKADARVLINRARVECQSHRLTVEDPVTVEYITRYIAGLQQKYTQSGGVRPFGLSTLIVGFDPYTGSPSLYQTDPSGTFSAWKANATGRNSNSIREFLEKNFKETSGQETVKLAIRALLEVVESGGKNIEVAVMTKENGLRQLEEAEIDAIVAEIEAEKAAAEAAKKAPPKDT.

It belongs to the peptidase T1A family. The 26S proteasome consists of a 20S proteasome core and two 19S regulatory subunits. The 20S proteasome core is composed of 28 subunits that are arranged in four stacked rings, resulting in a barrel-shaped structure. The two end rings are each formed by seven alpha subunits, and the two central rings are each formed by seven beta subunits. The catalytic chamber with the active sites is on the inside of the barrel.

Its subcellular location is the cytoplasm. It is found in the nucleus. Its function is as follows. The proteasome is a multicatalytic proteinase complex which is characterized by its ability to cleave peptides with Arg, Phe, Tyr, Leu, and Glu adjacent to the leaving group at neutral or slightly basic pH. The proteasome has an ATP-dependent proteolytic activity. The sequence is that of Proteasome subunit alpha type-7 (PAD1) from Cicer arietinum (Chickpea).